The primary structure comprises 208 residues: Probable hydrolase YcaC (208 aa).

C118 is an active-site residue.

Homooctamer composed of two tetrameric rings.

The polypeptide is Probable hydrolase YcaC (ycaC) (Escherichia coli (strain K12)).